Reading from the N-terminus, the 323-residue chain is Beta-ketoacyl-[acyl-carrier-protein] synthase III (323 aa).

Active-site residues include C113 and H250. An ACP-binding region spans residues 251 to 255 (QANRR). Residue N280 is part of the active site.

It belongs to the thiolase-like superfamily. FabH family. Homodimer.

It is found in the cytoplasm. It carries out the reaction malonyl-[ACP] + acetyl-CoA + H(+) = 3-oxobutanoyl-[ACP] + CO2 + CoA. It functions in the pathway lipid metabolism; fatty acid biosynthesis. Functionally, catalyzes the condensation reaction of fatty acid synthesis by the addition to an acyl acceptor of two carbons from malonyl-ACP. Catalyzes the first condensation reaction which initiates fatty acid synthesis and may therefore play a role in governing the total rate of fatty acid production. Possesses both acetoacetyl-ACP synthase and acetyl transacylase activities. Its substrate specificity determines the biosynthesis of branched-chain and/or straight-chain of fatty acids. This Allorhizobium ampelinum (strain ATCC BAA-846 / DSM 112012 / S4) (Agrobacterium vitis (strain S4)) protein is Beta-ketoacyl-[acyl-carrier-protein] synthase III.